The primary structure comprises 898 residues: Dipeptidyl peptidase 8 (898 aa).

Catalysis depends on charge relay system residues serine 755, aspartate 833, and histidine 865.

It belongs to the peptidase S9B family. DPPIV subfamily. In terms of assembly, homodimer. Forms a ternary complex with NLRP1, composed of a DPP8 homodimer, one full-length NLRP1 protein, and one cleaved C-terminus of NLRP1 (NACHT, LRR and PYD domains-containing protein 1, C-terminus). Forms a ternary complex with CARD8, composed of a DPP8 homodimer, one full-length NLRP1 protein, and one cleaved C-terminus of CARD8 (Caspase recruitment domain-containing protein 8, C-terminus). In the ternary complex, only one subunit of the DPP8 homodimer is bound to NLRP1 or CARD8. Ubiquitously expressed, with highest levels in testis, placenta, prostate, muscle and brain.

Its subcellular location is the cytoplasm. It carries out the reaction Release of an N-terminal dipeptide, Xaa-Yaa-|-Zaa-, from a polypeptide, preferentially when Yaa is Pro, provided Zaa is neither Pro nor hydroxyproline.. Inhibited by zinc. Inhibited by the serine proteinase inhibitor 4-(2-aminoethyl)benzenesulphonyl fluoride (AEBSF), and by di-isopropylfluorophosphate. Specifically inhibited by isoindoline derivatives. Inhibited by Val-boroPro (Talabostat, PT-100), a non-selective inhibitor, which triggers pyroptosis in monocytes and macrophages. Its function is as follows. Dipeptidyl peptidase that cleaves off N-terminal dipeptides from proteins having a Pro or Ala residue at position 2. Acts as a key inhibitor of caspase-1-dependent monocyte and macrophage pyroptosis in resting cells by preventing activation of NLRP1 and CARD8. Sequesters the cleaved C-terminal part of NLRP1 and CARD8, which respectively constitute the active part of the NLRP1 and CARD8 inflammasomes, in a ternary complex, thereby preventing their oligomerization and activation. The dipeptidyl peptidase activity is required to suppress NLRP1 and CARD8; however, neither NLRP1 nor CARD8 are bona fide substrates of DPP8, suggesting the existence of substrate(s) required for NLRP1 and CARD8 inhibition. This chain is Dipeptidyl peptidase 8, found in Homo sapiens (Human).